The following is a 701-amino-acid chain: Ribosomal RNA large subunit methyltransferase K/L (701 aa).

In terms of domain architecture, THUMP spans 43-155; it reads LLYKSLMWSR…NNILHIMLDL (113 aa).

It belongs to the methyltransferase superfamily. RlmKL family.

It is found in the cytoplasm. It catalyses the reaction guanosine(2445) in 23S rRNA + S-adenosyl-L-methionine = N(2)-methylguanosine(2445) in 23S rRNA + S-adenosyl-L-homocysteine + H(+). The catalysed reaction is guanosine(2069) in 23S rRNA + S-adenosyl-L-methionine = N(2)-methylguanosine(2069) in 23S rRNA + S-adenosyl-L-homocysteine + H(+). Its function is as follows. Specifically methylates the guanine in position 2445 (m2G2445) and the guanine in position 2069 (m7G2069) of 23S rRNA. This chain is Ribosomal RNA large subunit methyltransferase K/L, found in Buchnera aphidicola subsp. Acyrthosiphon pisum (strain APS) (Acyrthosiphon pisum symbiotic bacterium).